The chain runs to 167 residues: Small ribosomal subunit protein uS5 (167 aa).

An S5 DRBM domain is found at 12–75 (LQEKLITVNR…EKARRNMVTI (64 aa)).

Belongs to the universal ribosomal protein uS5 family. As to quaternary structure, part of the 30S ribosomal subunit. Contacts proteins S4 and S8.

In terms of biological role, with S4 and S12 plays an important role in translational accuracy. Functionally, located at the back of the 30S subunit body where it stabilizes the conformation of the head with respect to the body. This is Small ribosomal subunit protein uS5 from Buchnera aphidicola subsp. Schizaphis graminum (strain Sg).